A 1582-amino-acid chain; its full sequence is ATP-binding cassette sub-family C member 8 (1582 aa).

Over 1–30 (MPLAFCGTENHSAAYRVDQGVLNNGCFVDA) the chain is Extracellular. C6 and C26 are oxidised to a cystine. N-linked (GlcNAc...) asparagine glycosylation is present at N10. The chain crosses the membrane as a helical span at residues 31-47 (LNVVPHVFLLFITFPIL). Residues 48 to 72 (FIGWGSQSSKVHIHHSTWLHFPGHN) lie on the Cytoplasmic side of the membrane. A helical membrane pass occupies residues 73–89 (LRWILTFILLFVLVCEI). The Extracellular segment spans residues 90 to 106 (AEGILSDGVTESRHLHL). Residues 107–123 (YMPAGMAFMAAITSVVY) traverse the membrane as a helical segment. The Cytoplasmic segment spans residues 124-136 (YHNIETSNFPKLL). A helical membrane pass occupies residues 137–153 (IALLIYWTLAFITKTIK). At 154 to 169 (FVKFYDHAIGFSQLRF) the chain is on the extracellular side. A helical membrane pass occupies residues 170-186 (CLTGLLVILYGMLLLVE). Topologically, residues 187–303 (VNVIRVRRYI…AFGRRLILSS (117 aa)) are cytoplasmic. The region spanning 299 to 602 (LILSSTFRIL…LSSVVRSTVK (304 aa)) is the ABC transmembrane type-1 1 domain. A helical membrane pass occupies residues 304 to 319 (TFRILADLLGFAGPLC). Over 320 to 356 (IFGIVDHLGKENHVFQPKTQFLGVYFVSSQEFLGNAY) the chain is Extracellular. The helical transmembrane segment at 357-372 (VLAVLLFLALLLQRTF) threads the bilayer. The Cytoplasmic portion of the chain corresponds to 373–438 (LQASYYVAIE…MWFFFLCPNL (66 aa)). Residues 439–454 (WTMPVQIIVGVILLYY) form a helical membrane-spanning segment. Residues 455–460 (ILGVSA) are Extracellular-facing. A helical transmembrane segment spans residues 461 to 473 (LIGAAVIILLAPV). The Cytoplasmic portion of the chain corresponds to 474 to 541 (QYFVATKLSQ…SLRAFAVYTS (68 aa)). The chain crosses the membrane as a helical span at residues 542–557 (ISIFMNTAIPIAAVLI). At 558–576 (TFVGHVSFFKESDLSPSVA) the chain is on the extracellular side. Residues 577–592 (FASLSLFHILVTPLFL) form a helical membrane-spanning segment. The Cytoplasmic portion of the chain corresponds to 593 to 1013 (LSSVVRSTVK…YLSSAGILLL (421 aa)). Residues 679–930 (VQIIGGFFTW…ECQLFEHWKT (252 aa)) form the ABC transporter 1 domain. W688, G716, S720, and S721 together coordinate ATP. S720 provides a ligand contact to Mg(2+). A disordered region spans residues 741–766 (SNLPDSEGEDPSSPERETAAGSDIRS). Q775 is a Mg(2+) binding site. Over residues 939–950 (LEKETVMERKAS) the composition is skewed to basic and acidic residues. A disordered region spans residues 939 to 962 (LEKETVMERKASEPSQGLPRAMSS). The 295-residue stretch at 1013 to 1307 (LSLLVFSQLL…MVRNLADMEI (295 aa)) folds into the ABC transmembrane type-1 2 domain. A helical membrane pass occupies residues 1014 to 1031 (SLLVFSQLLKHMVLVAID). Topologically, residues 1032–1067 (YWLAKWTDSALVLSPAARNCSLSQECDLDQSVYAMV) are extracellular. N1050 carries an N-linked (GlcNAc...) asparagine glycan. Residues 1068–1084 (FTLLCSLGIVLCLVTSV) form a helical membrane-spanning segment. Residues 1085 to 1143 (TVEWTGLKVAKRLHRSLLNRIILAPMRFFETTPLGSILNRFSSDCNTIDQHIPSTLECL) lie on the Cytoplasmic side of the membrane. The chain crosses the membrane as a helical span at residues 1144 to 1161 (SRSTLLCVSALTVISYVT). Residue P1162 is a topological domain, extracellular. The chain crosses the membrane as a helical span at residues 1163–1175 (VFLVALLPLAVVC). Residues 1176–1249 (YFIQKYFRVA…FLTAANRWLE (74 aa)) lie on the Cytoplasmic side of the membrane. Residues 1250–1265 (VCMEYIGACVVLIAAA) traverse the membrane as a helical segment. Residues 1266-1281 (TSISNSLHRELSAGLV) are Extracellular-facing. The chain crosses the membrane as a helical span at residues 1282–1297 (GLGLTYALMVSNYLNW). Over 1298-1582 (MVRNLADMEI…VFASFVRADK (285 aa)) the chain is Cytoplasmic. The 235-residue stretch at 1345–1579 (IQIQNLSVRY…KDSVFASFVR (235 aa)) folds into the ABC transporter 2 domain. ADP-binding residues include T1381, G1382, G1384, K1385, S1386, and S1387. Residue S1483 coordinates ATP.

It belongs to the ABC transporter superfamily. ABCC family. Conjugate transporter (TC 3.A.1.208) subfamily. In terms of assembly, forms an heterooctamer with KCNJ11; four ABCC8/SUR1 molecules interact with one KCNJ11 homotetramer.

The protein localises to the cell membrane. Its activity is regulated as follows. KATP channels are regulated by cytoplasmic ATP/ADP ratios; ATP inhibits the channel by closing the pore, while ADP activates the channel. Activated by phosphatidylinositol 4,5-biphosphate (PtdIns(4,5)P2). Functionally, regulator subunit of pancreatic ATP-sensitive potassium channel (KATP), playing a major role in the regulation of insulin release. In pancreatic cells, it forms KATP channels with KCNJ11; KCNJ11 forms the channel pore while ABCC8 is required for activation and regulation. The polypeptide is ATP-binding cassette sub-family C member 8 (ABCC8) (Cricetus cricetus (Black-bellied hamster)).